The following is a 349-amino-acid chain: Core protein VP7 (349 aa).

Residue Asn-45 is glycosylated (N-linked (GlcNAc...) asparagine; by host).

It belongs to the orbivirus VP7 family. Homotrimer.

Its subcellular location is the virion. Major structural core protein; binds to structural protein VP3. Constitutes the surface of the AHSV core. The protein is Core protein VP7 (Segment-7) of African horse sickness virus 6 (AHSV-6).